The chain runs to 206 residues: Probable thymidylate kinase (206 aa).

10–17 (GIDGSGKS) provides a ligand contact to ATP.

This sequence belongs to the thymidylate kinase family.

It carries out the reaction dTMP + ATP = dTDP + ADP. This Methanosarcina acetivorans (strain ATCC 35395 / DSM 2834 / JCM 12185 / C2A) protein is Probable thymidylate kinase.